Reading from the N-terminus, the 258-residue chain is uncharacterized protein (258 aa).

7 helical membrane-spanning segments follow: residues 8 to 28, 38 to 58, 70 to 90, 121 to 141, 176 to 196, 204 to 224, and 231 to 251; these read VFLA…IVWF, VFFI…GGVH, EAMQ…GIFE, LEAI…AFAI, LGGI…LLVL, PLFL…AVLY, and HAAA…YWIV.

Its subcellular location is the cell membrane. This is an uncharacterized protein from Bacillus subtilis (strain 168).